Consider the following 332-residue polypeptide: Aspartate carbamoyltransferase catalytic subunit (332 aa).

2 residues coordinate carbamoyl phosphate: Arg78 and Thr79. Lys106 lines the L-aspartate pocket. 3 residues coordinate carbamoyl phosphate: Arg128, His156, and Gln159. Arg189 and Arg243 together coordinate L-aspartate. Carbamoyl phosphate is bound by residues Gly284 and Pro285.

Belongs to the aspartate/ornithine carbamoyltransferase superfamily. ATCase family. Heterododecamer (2C3:3R2) of six catalytic PyrB chains organized as two trimers (C3), and six regulatory PyrI chains organized as three dimers (R2).

It carries out the reaction carbamoyl phosphate + L-aspartate = N-carbamoyl-L-aspartate + phosphate + H(+). Its pathway is pyrimidine metabolism; UMP biosynthesis via de novo pathway; (S)-dihydroorotate from bicarbonate: step 2/3. Catalyzes the condensation of carbamoyl phosphate and aspartate to form carbamoyl aspartate and inorganic phosphate, the committed step in the de novo pyrimidine nucleotide biosynthesis pathway. This chain is Aspartate carbamoyltransferase catalytic subunit, found in Caulobacter vibrioides (strain ATCC 19089 / CIP 103742 / CB 15) (Caulobacter crescentus).